The chain runs to 315 residues: GTP cyclohydrolase MptA (315 aa).

The protein belongs to the GTP cyclohydrolase IV family. As to quaternary structure, homodimer. It depends on Fe(2+) as a cofactor.

The catalysed reaction is GTP + H2O = 7,8-dihydroneopterin 2',3'-cyclic phosphate + formate + diphosphate + H(+). The protein operates within cofactor biosynthesis; 5,6,7,8-tetrahydromethanopterin biosynthesis. Functionally, converts GTP to 7,8-dihydro-D-neopterin 2',3'-cyclic phosphate, the first intermediate in the biosynthesis of coenzyme methanopterin. The protein is GTP cyclohydrolase MptA of Methanococcus maripaludis (strain C5 / ATCC BAA-1333).